The chain runs to 587 residues: Glutamine--tRNA ligase (587 aa).

Positions 58–68 (PEPNGYLHIGH) match the 'HIGH' region motif. Residues 59 to 61 (EPN) and 65 to 71 (HIGHAKS) each bind ATP. 2 residues coordinate L-glutamine: D91 and Y240. ATP contacts are provided by residues T259 and 294 to 295 (RL). A 'KMSKS' region motif is present at residues 301–305 (VTSKR).

It belongs to the class-I aminoacyl-tRNA synthetase family. Monomer.

It localises to the cytoplasm. The catalysed reaction is tRNA(Gln) + L-glutamine + ATP = L-glutaminyl-tRNA(Gln) + AMP + diphosphate. The protein is Glutamine--tRNA ligase of Bordetella parapertussis (strain 12822 / ATCC BAA-587 / NCTC 13253).